A 227-amino-acid chain; its full sequence is E3 ubiquitin-protein ligase ZNRF1 (227 aa).

The disordered stretch occupies residues 1-42 (MGGKQSTAARSRGPFPGVSTDDSAVPPPGGAPHFGHYRTGGG). The N-myristoyl glycine moiety is linked to residue Gly2. The tract at residues 2 to 10 (GGKQSTAAR) is required for endosomal and lysosomal localization and myristoylation. Residues Ser50, Ser52, and Ser53 each carry the phosphoserine modification. The disordered stretch occupies residues 68 to 105 (PFGLYTPASRGTGDSERAPGGGGSASDSTYAHGNGYQE). Tyr103 is subject to Phosphotyrosine; by SRC. A Phosphoserine modification is found at Ser123. An RING-type; atypical zinc finger spans residues 184 to 225 (CVICLEELLQGDTIARLPCLCIYHKSCIDSWFEVNRSCPEHP).

As to quaternary structure, interacts with AKT1, GLUL and TUBB2A. Interacts with ZNRF2. Interacts (via its RING domain) with UBE2N. Interacts (when phosphorylated) with YWHAE. In terms of processing, N-myristoylation targets ZNRF1 to intracellular membranes. Post-translationally, phosphorylated by SRC at Tyr-103; leading to 'Lys-63'-linked ubiquitination of TLR3, lysosomal trafficking and degradation. Expressed primarily in the nervous system, with expression higher in developing brain relative to adult. Expressed at low levels in testis and thymus.

It localises to the endosome. The protein resides in the lysosome. The protein localises to the membrane. Its subcellular location is the cytoplasmic vesicle. It is found in the secretory vesicle. It localises to the synaptic vesicle membrane. It carries out the reaction S-ubiquitinyl-[E2 ubiquitin-conjugating enzyme]-L-cysteine + [acceptor protein]-L-lysine = [E2 ubiquitin-conjugating enzyme]-L-cysteine + N(6)-ubiquitinyl-[acceptor protein]-L-lysine.. It functions in the pathway protein modification; protein ubiquitination. E3 ubiquitin-protein ligase that plays a role in different processes including cell differentiation, receptor recycling or regulation of inflammation. Mediates the ubiquitination of AKT1 and GLUL, thereby playing a role in neuron cells differentiation. Plays a role in the establishment and maintenance of neuronal transmission and plasticity. Regulates Schwann cells differentiation by mediating ubiquitination of GLUL. Promotes neurodegeneration by mediating 'Lys-48'-linked polyubiquitination and subsequent degradation of AKT1 in axons: degradation of AKT1 prevents AKT1-mediated phosphorylation of GSK3B, leading to GSK3B activation and phosphorylation of DPYSL2/CRMP2 followed by destabilization of microtubule assembly in axons. Ubiquitinates the Na(+)/K(+) ATPase alpha-1 subunit/ATP1A1 and thereby influences its endocytosis and/or degradation. Controls ligand-induced EGFR signaling via mediating receptor ubiquitination and recruitment of the ESCRT machinery. Acts as a negative feedback mechanism controlling TLR3 trafficking by mediating TLR3 'Lys-63'-linked polyubiquitination to reduce type I IFN production. Modulates inflammation by promoting caveolin-1/CAV1 ubiquitination and degradation to regulate TLR4-activated immune response. In Homo sapiens (Human), this protein is E3 ubiquitin-protein ligase ZNRF1 (ZNRF1).